We begin with the raw amino-acid sequence, 464 residues long: Fumarate hydratase class II (464 aa).

Substrate is bound by residues 98–100 (SGT), 129–132 (HPND), 139–141 (SSN), and Thr187. The active-site Proton donor/acceptor is the His188. Ser318 is an active-site residue. Substrate-binding positions include Ser319 and 324 to 326 (KVN).

It belongs to the class-II fumarase/aspartase family. Fumarase subfamily. In terms of assembly, homotetramer.

Its subcellular location is the cytoplasm. The catalysed reaction is (S)-malate = fumarate + H2O. Its pathway is carbohydrate metabolism; tricarboxylic acid cycle; (S)-malate from fumarate: step 1/1. Its function is as follows. Involved in the TCA cycle. Catalyzes the stereospecific interconversion of fumarate to L-malate. The sequence is that of Fumarate hydratase class II from Haemophilus influenzae (strain ATCC 51907 / DSM 11121 / KW20 / Rd).